The primary structure comprises 699 residues: Elongation factor G (699 aa).

The tr-type G domain occupies Glu8–Ile287. Residues Ala17–Thr24, Asp85–His89, and Asn139–Asp142 each bind GTP.

Belongs to the TRAFAC class translation factor GTPase superfamily. Classic translation factor GTPase family. EF-G/EF-2 subfamily.

The protein resides in the cytoplasm. Catalyzes the GTP-dependent ribosomal translocation step during translation elongation. During this step, the ribosome changes from the pre-translocational (PRE) to the post-translocational (POST) state as the newly formed A-site-bound peptidyl-tRNA and P-site-bound deacylated tRNA move to the P and E sites, respectively. Catalyzes the coordinated movement of the two tRNA molecules, the mRNA and conformational changes in the ribosome. This chain is Elongation factor G (fusA), found in Aquifex aeolicus (strain VF5).